A 368-amino-acid chain; its full sequence is Glutamate 5-kinase (368 aa).

Lys-11 serves as a coordination point for ATP. Residues Ser-51, Asp-138, and Asn-150 each contribute to the substrate site. ATP contacts are provided by residues 170–171 (TD) and 212–218 (TGGMATK). In terms of domain architecture, PUA spans 276–354 (AGEIIVDHGA…QQISQILGYE (79 aa)).

The protein belongs to the glutamate 5-kinase family.

The protein localises to the cytoplasm. The enzyme catalyses L-glutamate + ATP = L-glutamyl 5-phosphate + ADP. The protein operates within amino-acid biosynthesis; L-proline biosynthesis; L-glutamate 5-semialdehyde from L-glutamate: step 1/2. Functionally, catalyzes the transfer of a phosphate group to glutamate to form L-glutamate 5-phosphate. This Photorhabdus laumondii subsp. laumondii (strain DSM 15139 / CIP 105565 / TT01) (Photorhabdus luminescens subsp. laumondii) protein is Glutamate 5-kinase.